The following is a 318-amino-acid chain: Olfactory receptor 5G26 (318 aa).

The Extracellular portion of the chain corresponds to 1–28 (MMHRNQTVVTEFFFTGLTSSFHLQIVLF). Residue Asn-5 is glycosylated (N-linked (GlcNAc...) asparagine). Residues 29-49 (LTFLCVYLATLLGNLGMIILI) form a helical membrane-spanning segment. The Cytoplasmic portion of the chain corresponds to 50 to 56 (HLDTRLH). The helical transmembrane segment at 57–77 (IPMYFFLSHLSFVDACSSSVI) threads the bilayer. Residues 78 to 93 (SPKMLSDMFVDKKVIS) lie on the Extracellular side of the membrane. Residues 94-114 (FLGCAIQLCLFSQFVVTECFL) traverse the membrane as a helical segment. A disulfide bond links Cys-97 and Cys-189. Topologically, residues 115–144 (LASMAYDRYVAICKPLLYTLIMSQRVCVQL) are cytoplasmic. Residues 145-165 (VIGPYSIGFVSTMVHIISAFV) traverse the membrane as a helical segment. The Extracellular portion of the chain corresponds to 166 to 198 (LPYCGPNLINHFFCDLLPVLSLACANTQMKKRL). A helical membrane pass occupies residues 199-219 (LFIVAGILGVFSGIIILVSYV). The Cytoplasmic portion of the chain corresponds to 220–239 (YIAITILKISSADGRRKAFS). A helical membrane pass occupies residues 240–260 (TCSSHLTAVSILYGTLFFIYV). The Extracellular segment spans residues 261-271 (RPSSSFSLDIN). The helical transmembrane segment at 272–292 (KVVSLFYTTVIPMLNPFIYSL) threads the bilayer. Residues 293–318 (RNKEVKDALIRTFEKQFCYSFQDKIL) lie on the Cytoplasmic side of the membrane.

It belongs to the G-protein coupled receptor 1 family.

The protein localises to the cell membrane. Its function is as follows. Potential odorant receptor. The chain is Olfactory receptor 5G26 from Mus musculus (Mouse).